Reading from the N-terminus, the 568-residue chain is Sulfite reductase [NADPH] hemoprotein beta-component (568 aa).

4 residues coordinate [4Fe-4S] cluster: Cys-425, Cys-431, Cys-470, and Cys-474. Cys-474 serves as a coordination point for siroheme.

Belongs to the nitrite and sulfite reductase 4Fe-4S domain family. As to quaternary structure, alpha(8)-beta(8). The alpha component is a flavoprotein, the beta component is a hemoprotein. It depends on siroheme as a cofactor. The cofactor is [4Fe-4S] cluster.

It carries out the reaction hydrogen sulfide + 3 NADP(+) + 3 H2O = sulfite + 3 NADPH + 4 H(+). It functions in the pathway sulfur metabolism; hydrogen sulfide biosynthesis; hydrogen sulfide from sulfite (NADPH route): step 1/1. In terms of biological role, component of the sulfite reductase complex that catalyzes the 6-electron reduction of sulfite to sulfide. This is one of several activities required for the biosynthesis of L-cysteine from sulfate. The sequence is that of Sulfite reductase [NADPH] hemoprotein beta-component from Xanthomonas oryzae pv. oryzae (strain MAFF 311018).